The sequence spans 372 residues: Glutamate 5-kinase (372 aa).

ATP is bound at residue Lys-14. Substrate contacts are provided by Ser-54, Asp-141, and Asn-153. 173–174 is an ATP binding site; sequence TD. The PUA domain occupies 280-358; the sequence is RGHVVIDAGA…GEIETVLGYM (79 aa).

Belongs to the glutamate 5-kinase family.

The protein localises to the cytoplasm. The enzyme catalyses L-glutamate + ATP = L-glutamyl 5-phosphate + ADP. Its pathway is amino-acid biosynthesis; L-proline biosynthesis; L-glutamate 5-semialdehyde from L-glutamate: step 1/2. Catalyzes the transfer of a phosphate group to glutamate to form L-glutamate 5-phosphate. The protein is Glutamate 5-kinase of Burkholderia mallei (strain NCTC 10229).